A 231-amino-acid polypeptide reads, in one-letter code: tRNA (guanine-N(1)-)-methyltransferase (231 aa).

S-adenosyl-L-methionine is bound by residues Gly-112 and 132–137; that span reads LGDFVL.

It belongs to the RNA methyltransferase TrmD family. As to quaternary structure, homodimer.

Its subcellular location is the cytoplasm. The catalysed reaction is guanosine(37) in tRNA + S-adenosyl-L-methionine = N(1)-methylguanosine(37) in tRNA + S-adenosyl-L-homocysteine + H(+). In terms of biological role, specifically methylates guanosine-37 in various tRNAs. This Gloeothece citriformis (strain PCC 7424) (Cyanothece sp. (strain PCC 7424)) protein is tRNA (guanine-N(1)-)-methyltransferase.